A 1516-amino-acid polypeptide reads, in one-letter code: UDP-glucose:glycoprotein glucosyltransferase 2 (1516 aa).

A signal peptide spans 1–27 (MAPAKATNVVRLLLGSTALWLSQLGSG). Asn-256, Asn-286, Asn-920, and Asn-950 each carry an N-linked (GlcNAc...) asparagine glycan. Positions 1220 to 1516 (LHKENKKEKD…QDTILTHDEL (297 aa)) are glucosyltransferase. Tyr-1289 is modified (phosphotyrosine). Positions 1513–1516 (HDEL) match the Prevents secretion from ER motif.

Belongs to the glycosyltransferase 8 family. In terms of assembly, interacts with METTL23. Interacts with SELENOF. Ca(2+) is required as a cofactor. It depends on Mn(2+) as a cofactor. As to expression, higher levels in kidney, pancreas, heart, and skeletal muscle.

The protein localises to the endoplasmic reticulum lumen. The protein resides in the endoplasmic reticulum-Golgi intermediate compartment. It catalyses the reaction N(4)-(alpha-D-Man-(1-&gt;2)-alpha-D-Man-(1-&gt;2)-alpha-D-Man-(1-&gt;3)-[alpha-D-Man-(1-&gt;2)-alpha-D-Man-(1-&gt;3)-[alpha-D-Man-(1-&gt;2)-alpha-D-Man-(1-&gt;6)]-alpha-D-Man-(1-&gt;6)]-beta-D-Man-(1-&gt;4)-beta-D-GlcNAc-(1-&gt;4)-beta-D-GlcNAc)-L-asparaginyl-[protein] (N-glucan mannose isomer 9A1,2,3B1,2,3) + UDP-alpha-D-glucose = N(4)-(alpha-D-Glc-(1-&gt;3)-alpha-D-Man-(1-&gt;2)-alpha-D-Man-(1-&gt;2)-alpha-D-Man-(1-&gt;3)-[alpha-D-Man-(1-&gt;2)-alpha-D-Man-(1-&gt;3)-[alpha-D-Man-(1-&gt;2)-alpha-D-Man-(1-&gt;6)]-alpha-D-Man-(1-&gt;6)]-beta-D-Man-(1-&gt;4)-beta-D-GlcNAc-(1-&gt;4)-beta-D-GlcNAc)-L-asparaginyl-[protein] + UDP + H(+). It participates in protein modification; protein glycosylation. Ethylenediaminetetraacetic acid completely abolishes catalytic activity. Catalytic activity is enhanced by complex formation with SELENOF. In terms of biological role, recognizes glycoproteins with minor folding defects. Reglucosylates single N-glycans near the misfolded part of the protein, thus providing quality control for protein folding in the endoplasmic reticulum. Reglucosylated proteins are recognized by calreticulin for recycling to the endoplasmic reticulum and refolding or degradation. The sequence is that of UDP-glucose:glycoprotein glucosyltransferase 2 (UGGT2) from Homo sapiens (Human).